A 322-amino-acid chain; its full sequence is Cysteine protease YopT (322 aa).

Positions 43–72 (SHSNRQKKLSATIKHNQSSRSMLDRKLTSD) are disordered. Active-site residues include Cys-139, His-258, and Asp-274.

This sequence belongs to the peptidase C58 family. As to quaternary structure, interacts with human ARHA.

The protein resides in the secreted. Functionally, cysteine protease, which is translocated into infected cells and plays a central role in pathogenesis by cleaving the C-terminus end of the human small GTPase RhoA/ARHA, a regulator of cytoskeleton. Once cleaved, ARHA loses its lipid modification, and is released from the cell membrane, leading to the subsequent disruption of actin cytoskeleton of the host cell. The protein is Cysteine protease YopT (yopT) of Yersinia enterocolitica.